Reading from the N-terminus, the 308-residue chain is Snake venom metalloprotease inhibitor 02D01 (308 aa).

The N-terminal stretch at 1-23 is a signal peptide; sequence MFVSRLAASGLLLLSLLALSLDG. Residues 24–38 constitute a propeptide that is removed on maturation; that stretch reads KPLPQRQPHHIQPME. Glutamine 39 is subject to Pyrrolidone carboxylic acid. A propeptide spanning residues 42–50 is cleaved from the precursor; the sequence is LAPDAPPLE. Position 51 is a pyrrolidone carboxylic acid (glutamine 51). Positions 54–62 are excised as a propeptide; sequence LAPDAPPLE. A Pyrrolidone carboxylic acid modification is found at glutamine 63. Positions 66–74 are excised as a propeptide; the sequence is LAPAAPPLE. Pyrrolidone carboxylic acid is present on glutamine 75. The propeptide occupies 78 to 86; sequence LAPDAPPME. At glutamine 87 the chain carries Pyrrolidone carboxylic acid. Positions 90–98 are excised as a propeptide; sequence LAPDAPPME. Glutamine 99 bears the Pyrrolidone carboxylic acid mark. The propeptide occupies 102–110; the sequence is LAPDAPPME. At glutamine 111 the chain carries Pyrrolidone carboxylic acid. The propeptide occupies 114–122; the sequence is LAPDAPPME. Position 123 is a pyrrolidone carboxylic acid (glutamine 123). Residues 126-134 constitute a propeptide that is removed on maturation; that stretch reads LAPDAAPLE. A Pyrrolidone carboxylic acid modification is found at glutamine 135. Residues 138–146 constitute a propeptide that is removed on maturation; sequence LAPDAPPME. Pyrrolidone carboxylic acid is present on glutamine 147. The propeptide occupies 150-158; it reads LAPDAPPME. Glutamine 159 carries the pyrrolidone carboxylic acid modification. Positions 162-249 are excised as a propeptide; that stretch reads QPQIPSLMEQ…KQASQKWGRL (88 aa). The span at 172 to 182 shows a compositional bias: polar residues; it reads RQLSSGGTTAL. Disordered stretches follow at residues 172–228 and 252–279; these read RQLS…AAAT and HDHDHHHHHHPGSSVGGGGGGGGGGARR. Over residues 198 to 209 the composition is skewed to gly residues; that stretch reads VVGGGGGGGGGS. Residues 210 to 227 are compositionally biased toward low complexity; that stretch reads KAALALPKPPKAKGAAAA. A compositionally biased stretch (gly residues) spans 265 to 277; the sequence is SVGGGGGGGGGGA. A propeptide spanning residues 278–286 is cleaved from the precursor; sequence RRLKGLAKK. A disulfide bond links cysteine 292 and cysteine 308.

This sequence in the C-terminal section; belongs to the natriuretic peptide family. The protein in the central section; belongs to the pHpG family. In terms of tissue distribution, expressed by the venom gland.

Its subcellular location is the secreted. Functionally, pEKW and poly-His-poly-Gly peptides may serve as metalloproteinase inhibitors during glandular storage. Their inhibition may be instantly disengaged, by dilution or physiochemical change, when venom is injected into tissue of the prey. In terms of biological role, has a vasorelaxant activity in rat aortic strips and a diuretic potency in anesthetized rats. May act by activating natriuretic receptors (NPR1 and/or NPR2). This Echis ocellatus (Ocellated saw-scaled viper) protein is Snake venom metalloprotease inhibitor 02D01.